A 457-amino-acid chain; its full sequence is tRNA modification GTPase MnmE (457 aa).

Residues Arg-24, Glu-81, and Lys-121 each contribute to the (6S)-5-formyl-5,6,7,8-tetrahydrofolate site. The TrmE-type G domain maps to 218–380 (GIKIVITGKP…LLKYLTKIIS (163 aa)). Asn-228 lines the K(+) pocket. Residues 228–233 (NVGKSS), 247–253 (TNIAGTT), 272–275 (DTAG), and 338–341 (NKAD) contribute to the GTP site. Residue Ser-232 participates in Mg(2+) binding. Residues Thr-247, Ile-249, and Thr-252 each coordinate K(+). Thr-253 serves as a coordination point for Mg(2+). (6S)-5-formyl-5,6,7,8-tetrahydrofolate is bound at residue Lys-457.

The protein belongs to the TRAFAC class TrmE-Era-EngA-EngB-Septin-like GTPase superfamily. TrmE GTPase family. Homodimer. Heterotetramer of two MnmE and two MnmG subunits. It depends on K(+) as a cofactor.

It localises to the cytoplasm. Functionally, exhibits a very high intrinsic GTPase hydrolysis rate. Involved in the addition of a carboxymethylaminomethyl (cmnm) group at the wobble position (U34) of certain tRNAs, forming tRNA-cmnm(5)s(2)U34. This is tRNA modification GTPase MnmE from Baumannia cicadellinicola subsp. Homalodisca coagulata.